Here is a 287-residue protein sequence, read N- to C-terminus: 26S proteasome non-ATPase regulatory subunit 8 (287 aa).

Serine 43 is modified (phosphoserine). The region spanning 99 to 268 is the PCI domain; that stretch reads PSFERYMAQL…QQKPEDTTIP (170 aa). Lysine 234 is covalently cross-linked (Glycyl lysine isopeptide (Lys-Gly) (interchain with G-Cter in SUMO2)).

This sequence belongs to the proteasome subunit S14 family. As to quaternary structure, component of the 19S proteasome regulatory particle complex. The 26S proteasome consists of a 20S core particle (CP) and two 19S regulatory subunits (RP). The regulatory particle is made of a lid composed of 9 subunits including PSMD8, a base containing 6 ATPases and few additional components. Interacts with DDI2. Interacts with TASOR.

In terms of biological role, component of the 26S proteasome, a multiprotein complex involved in the ATP-dependent degradation of ubiquitinated proteins. This complex plays a key role in the maintenance of protein homeostasis by removing misfolded or damaged proteins, which could impair cellular functions, and by removing proteins whose functions are no longer required. Therefore, the proteasome participates in numerous cellular processes, including cell cycle progression, apoptosis, or DNA damage repair. This is 26S proteasome non-ATPase regulatory subunit 8 (PSMD8) from Bos taurus (Bovine).